We begin with the raw amino-acid sequence, 334 residues long: Methionine adenosyltransferase 2 subunit beta (334 aa).

Residues 37-40 (TGLL), 60-62 (FRR), 71-72 (NL), cysteine 93, arginine 97, tyrosine 159, and leucine 185 each bind NADP(+). Threonine 309 carries the phosphothreonine modification. Residues 319 to 334 (LWPFLIDKRWRQTVFH) form a required for interaction with MAT2A region.

The protein belongs to the dTDP-4-dehydrorhamnose reductase family. MAT2B subfamily. In terms of assembly, heterotrimer; composed of a catalytic MAT2A homodimer that binds one regulatory MAT2B chain. Heterohexamer; composed of a central, catalytic MAT2A homotetramer flanked on either side by a regulatory MAT2B chain. NADP binding increases the affinity for MAT2A.

It participates in amino-acid biosynthesis; S-adenosyl-L-methionine biosynthesis; S-adenosyl-L-methionine from L-methionine: step 1/1. Regulatory subunit of S-adenosylmethionine synthetase 2, an enzyme that catalyzes the formation of S-adenosylmethionine from methionine and ATP. Regulates MAT2A catalytic activity by changing its kinetic properties, increasing its affinity for L-methionine. Can bind NADP (in vitro). This chain is Methionine adenosyltransferase 2 subunit beta (Mat2b), found in Rattus norvegicus (Rat).